The following is a 158-amino-acid chain: RING-H2 finger protein ATL66 (158 aa).

The chain crosses the membrane as a helical span at residues 33 to 53 (LFFALALFSVVLFFALLTLYI). Residues 107–149 (CCICLGGFEEGEKMKVLPPCSHCYHCECVDRWLKTESSCPLCR) form an RING-type; atypical zinc finger.

This sequence belongs to the RING-type zinc finger family. ATL subfamily.

The protein localises to the membrane. The enzyme catalyses S-ubiquitinyl-[E2 ubiquitin-conjugating enzyme]-L-cysteine + [acceptor protein]-L-lysine = [E2 ubiquitin-conjugating enzyme]-L-cysteine + N(6)-ubiquitinyl-[acceptor protein]-L-lysine.. Its pathway is protein modification; protein ubiquitination. The polypeptide is RING-H2 finger protein ATL66 (ATL66) (Arabidopsis thaliana (Mouse-ear cress)).